The sequence spans 230 residues: MFARSFSNASRTIARRSLSTRSGPAPSSLWSSRNAVIAGTTLAITALAVTSERRKVFNESAQKATSPRDSIIAQDSLKENVHKKSVRQDEFSGESTKPEASTSSDSVEKAADDAAQILEEKEAEASEPSQGAYNPETGEINWDCPCLGGMATGPCGEQFKAAFSCFVYSEAEPKGVDCVELFKVMQDCFREHPEIYGEEIDDDEAPAQEGTMEEKVEAAKEETAAPAAAP.

A mitochondrion-targeting transit peptide spans 1–18 (MFARSFSNASRTIARRSL). Positions 1 to 22 (MFARSFSNASRTIARRSLSTRS) are enriched in polar residues. Positions 1–30 (MFARSFSNASRTIARRSLSTRSGPAPSSLW) are disordered. Over 19–34 (STRSGPAPSSLWSSRN) the chain is Mitochondrial matrix. The chain crosses the membrane as a helical; Signal-anchor for type II membrane protein span at residues 35 to 51 (AVIAGTTLAITALAVTS). Topologically, residues 52–230 (ERRKVFNESA…EETAAPAAAP (179 aa)) are mitochondrial intermembrane. The disordered stretch occupies residues 58 to 111 (NESAQKATSPRDSIIAQDSLKENVHKKSVRQDEFSGESTKPEASTSSDSVEKAA). Polar residues predominate over residues 59–68 (ESAQKATSPR). A compositionally biased stretch (basic and acidic residues) spans 76-90 (SLKENVHKKSVRQDE). The segment covering 93–105 (GESTKPEASTSSD) has biased composition (polar residues). 3 cysteine pairs are disulfide-bonded: Cys-144–Cys-146, Cys-155–Cys-188, and Cys-165–Cys-178. A CHCH domain is found at 152-196 (TGPCGEQFKAAFSCFVYSEAEPKGVDCVELFKVMQDCFREHPEIY). Short sequence motifs (cx9C motif) lie at residues 155–165 (CGEQFKAAFSC) and 178–188 (CVELFKVMQDC). The tract at residues 195–230 (IYGEEIDDDEAPAQEGTMEEKVEAAKEETAAPAAAP) is disordered. Residues 196 to 206 (YGEEIDDDEAP) show a composition bias toward acidic residues. The span at 212–223 (MEEKVEAAKEET) shows a compositional bias: basic and acidic residues.

Monomer. Cu(2+) is required as a cofactor. The cofactor is Zn(2+).

It is found in the mitochondrion inner membrane. Its function is as follows. Required for the import and folding of small cysteine-containing proteins (small Tim) in the mitochondrial intermembrane space (IMS). Forms a redox cycle with ERV1 that involves a disulfide relay system. Precursor proteins to be imported into the IMS are translocated in their reduced form into the mitochondria. The oxidized form of MIA40 forms a transient intermolecular disulfide bridge with the reduced precursor protein, resulting in oxidation of the precursor protein that now contains an intramolecular disulfide bond and is able to undergo folding in the IMS. The polypeptide is Mitochondrial intermembrane space import and assembly protein 40 (MIA40) (Cryptococcus neoformans var. neoformans serotype D (strain JEC21 / ATCC MYA-565) (Filobasidiella neoformans)).